Reading from the N-terminus, the 643-residue chain is MAEFETTFADLGLKAPILEALTDLGYEKPSPIQAECIPHLLDGRDVLGMAQTGSGKTAAFSLPLLNNIDPELRAPQILVLAPTRELAVQVAEAMTEFSKHMRGVNVVALYGGQRYDVQLRALRQGPQIVVGTPGRLLDHLKRGTLDLSKLSGLVLDEADEMLRMGFIEDVETIMAQIPEGHQTALFSATMPEAIRRITRRFMKEPQEVRIQSSVTTRPDISQSYWTAYGMRKNEALVRFLEAEDFDAAIIFVRTKNATLEVAEALERNGYNSAALNGDMNQALREQALERLKDGRLDILIATDVAARGLDVERISLVVNYDIPMDSESYVHRIGRTGRAGRAGRALLFVENRERRLLRNIERTMKLTIPEVELPNAELLSKRRLEKFAAKVQQQLESSDLDQYRALLAKIHATAEGEELDVETLAAALLKMAQGERSLIVPPVAPMRPRREFRDRDDSFDRRGDRNDRGPRGDREDRPKRERRDVGDMELYRIEVGRDDGVEVRHIVGAIANEGDISSRYIGNIKLFASHSTIELPKGMPGEVLQHFTRTRILNKPMNMQLLGDAQPRTERRGGGERREGGRGFGGERREGGRGFGGERREGGRGEGRRFSGERREGRAPGRDDASAPRRDDSAGRRRFGGDA.

A Q motif motif is present at residues 6–34; sequence TTFADLGLKAPILEALTDLGYEKPSPIQA. The 172-residue stretch at 37–208 folds into the Helicase ATP-binding domain; sequence IPHLLDGRDV…RRFMKEPQEV (172 aa). 50–57 serves as a coordination point for ATP; sequence AQTGSGKT. The DEAD box motif lies at 156–159; that stretch reads DEAD. One can recognise a Helicase C-terminal domain in the interval 232-379; that stretch reads KNEALVRFLE…EVELPNAELL (148 aa). 2 disordered regions span residues 440–482 and 557–643; these read VPPV…KRER and MNMQ…GGDA. Basic and acidic residues-rich tracts occupy residues 448-482 and 567-643; these read PRRE…KRER and PRTE…GGDA.

Belongs to the DEAD box helicase family. DeaD/CsdA subfamily.

It localises to the cytoplasm. It catalyses the reaction ATP + H2O = ADP + phosphate + H(+). DEAD-box RNA helicase involved in various cellular processes at low temperature, including ribosome biogenesis, mRNA degradation and translation initiation. This Klebsiella pneumoniae protein is ATP-dependent RNA helicase DeaD.